Reading from the N-terminus, the 249-residue chain is NAD(P)H-quinone oxidoreductase subunit K (249 aa).

Residues cysteine 65, cysteine 66, cysteine 130, and cysteine 161 each coordinate [4Fe-4S] cluster.

It belongs to the complex I 20 kDa subunit family. As to quaternary structure, NDH-1 can be composed of about 15 different subunits; different subcomplexes with different compositions have been identified which probably have different functions. Requires [4Fe-4S] cluster as cofactor.

The protein resides in the cellular thylakoid membrane. The catalysed reaction is a plastoquinone + NADH + (n+1) H(+)(in) = a plastoquinol + NAD(+) + n H(+)(out). The enzyme catalyses a plastoquinone + NADPH + (n+1) H(+)(in) = a plastoquinol + NADP(+) + n H(+)(out). Functionally, NDH-1 shuttles electrons from an unknown electron donor, via FMN and iron-sulfur (Fe-S) centers, to quinones in the respiratory and/or the photosynthetic chain. The immediate electron acceptor for the enzyme in this species is believed to be plastoquinone. Couples the redox reaction to proton translocation, and thus conserves the redox energy in a proton gradient. Cyanobacterial NDH-1 also plays a role in inorganic carbon-concentration. The protein is NAD(P)H-quinone oxidoreductase subunit K of Prochlorococcus marinus (strain NATL2A).